We begin with the raw amino-acid sequence, 193 residues long: MSIFISPSNNTGWGLRAPSKMYGGAXQRSTQHPVRVRGHFRAPWGALKGRVRSRTTVDDVIDQVVADARNYTPAAAPVSTVDAVIDSVVSDARRYARAKSRRRRIARRHRSTTAMRAARALLRRARRTGRRAMLRAARRAASGASAGRTRRRAATAAATAISSMSRPRRGNVYWVRDXATGVRVPVRTRPPRT.

Ser2 is modified (N-acetylserine; by host). A propeptide spanning residues 2-24 is cleaved from the precursor; it reads SIFISPSNNTGWGLRAPSKMYGG. Lys48 is modified (N6-acetyllysine; by host). The residue at position 55 (Thr55) is a Phosphothreonine; by host. The Nuclear localization signal motif lies at 183 to 193; the sequence is RVPVRTRPPRT.

This sequence belongs to the adenoviridae histone-like nucleoprotein family. Interacts with the core-capsid bridging protein; this interaction bridges the virus core to the capsid. Interacts with host NPM1; this interaction might play a role in placing the pre-histone-like nucleoprotein on the viral DNA or regulating viral gene expression. Interacts with host HMGB1; this interaction inhibits host immune response. In terms of processing, cleaved near the N-terminus by the viral protease during virion maturation to form the mature protein.

Its subcellular location is the virion. The protein resides in the host nucleus. It localises to the host nucleolus. Plays a role in the inhibition of host immune response within the nucleus. Interacts with cellular nucleosomes and immobilizes the host immune danger signal HMGB1 on chromatin. In turn, prevents HMGB1 release out of the cell and thus decreases inflammation. Also plays a role in the wrapping and condensation of the viral DNA. May also promote viral genome import into the nucleus. The polypeptide is Pre-histone-like nucleoprotein (Homo sapiens (Human)).